An 87-amino-acid chain; its full sequence is DNA-directed RNA polymerase subunit omega (87 aa).

It belongs to the RNA polymerase subunit omega family. In terms of assembly, the RNAP catalytic core consists of 2 alpha, 1 beta, 1 beta' and 1 omega subunit. When a sigma factor is associated with the core the holoenzyme is formed, which can initiate transcription.

The catalysed reaction is RNA(n) + a ribonucleoside 5'-triphosphate = RNA(n+1) + diphosphate. Promotes RNA polymerase assembly. Latches the N- and C-terminal regions of the beta' subunit thereby facilitating its interaction with the beta and alpha subunits. The protein is DNA-directed RNA polymerase subunit omega of Ectopseudomonas mendocina (strain ymp) (Pseudomonas mendocina).